The sequence spans 272 residues: Protein FAM210A (272 aa).

The 113-residue stretch at 117-229 (DKSISLYQRF…GYMSTPPPVK (113 aa)) folds into the DUF1279 domain. The helical transmembrane segment at 136-156 (VLIPVHLITSGVWFGTFYYAA) threads the bilayer. Residues 229 to 271 (KEYLQDRMEETKELITEKMEETKDRLTEKLQETKEKVSFKKKV) are a coiled coil. The segment at 246 to 272 (KMEETKDRLTEKLQETKEKVSFKKKVE) is disordered.

This sequence belongs to the FAM210 family. In terms of assembly, interacts with ATAD3A.

The protein localises to the membrane. It localises to the mitochondrion. It is found in the cytoplasm. Its function is as follows. May play a role in the structure and strength of both muscle and bone. In Homo sapiens (Human), this protein is Protein FAM210A (FAM210A).